The primary structure comprises 457 residues: Argininosuccinate lyase (457 aa).

This sequence belongs to the lyase 1 family. Argininosuccinate lyase subfamily.

It localises to the cytoplasm. The enzyme catalyses 2-(N(omega)-L-arginino)succinate = fumarate + L-arginine. The protein operates within amino-acid biosynthesis; L-arginine biosynthesis; L-arginine from L-ornithine and carbamoyl phosphate: step 3/3. The protein is Argininosuccinate lyase of Bacillus pumilus (strain SAFR-032).